The following is a 212-amino-acid chain: Transcription factor MYB8 (212 aa).

HTH myb-type domains lie at 9 to 61 (KAHM…INYL) and 62 to 116 (RPDL…KRKL). 2 DNA-binding regions (H-T-H motif) span residues 37–61 (WRSLPKSVGLLRCGKSCRLRWINYL) and 89–112 (WSLIAGKLPGRTDNEIKNYWNTHI).

The protein localises to the nucleus. Its function is as follows. Transcription activator. This is Transcription factor MYB8 from Arabidopsis thaliana (Mouse-ear cress).